Here is a 110-residue protein sequence, read N- to C-terminus: Large ribosomal subunit protein uL22 (110 aa).

Belongs to the universal ribosomal protein uL22 family. As to quaternary structure, part of the 50S ribosomal subunit.

In terms of biological role, this protein binds specifically to 23S rRNA; its binding is stimulated by other ribosomal proteins, e.g. L4, L17, and L20. It is important during the early stages of 50S assembly. It makes multiple contacts with different domains of the 23S rRNA in the assembled 50S subunit and ribosome. Functionally, the globular domain of the protein is located near the polypeptide exit tunnel on the outside of the subunit, while an extended beta-hairpin is found that lines the wall of the exit tunnel in the center of the 70S ribosome. This chain is Large ribosomal subunit protein uL22, found in Hydrogenovibrio crunogenus (strain DSM 25203 / XCL-2) (Thiomicrospira crunogena).